A 225-amino-acid polypeptide reads, in one-letter code: MEPIKNIPRLCRTLGYDFSELALLDHALTHRSAASKHNERLEFLGDSILSIIISDALYHQFPKATEGDLSRMRATLVCGKMLAEIGFEFKLGDYLKLGPGELKSGGFRRESIIADAVEAIIGAVYLDSDLEVTRSLVLGWYKTRLETIQPINQKDPKTLLQELLQGYKKPLPVYKVTDIRGEAHAQTFTIECYVEELRKPVVGVASSRRKAEQLAAAQALELIKR.

One can recognise an RNase III domain in the interval 7-129 (IPRLCRTLGY…IIGAVYLDSD (123 aa)). Mg(2+) is bound at residue glutamate 42. Aspartate 46 is a catalytic residue. The Mg(2+) site is built by aspartate 115 and glutamate 118. Glutamate 118 is a catalytic residue. A DRBM domain is found at 155-225 (DPKTLLQELL…AAQALELIKR (71 aa)).

It belongs to the ribonuclease III family. In terms of assembly, homodimer. Requires Mg(2+) as cofactor.

Its subcellular location is the cytoplasm. The catalysed reaction is Endonucleolytic cleavage to 5'-phosphomonoester.. In terms of biological role, digests double-stranded RNA. Involved in the processing of primary rRNA transcript to yield the immediate precursors to the large and small rRNAs (23S and 16S). Processes some mRNAs, and tRNAs when they are encoded in the rRNA operon. Processes pre-crRNA and tracrRNA of type II CRISPR loci if present in the organism. The protein is Ribonuclease 3 of Shewanella woodyi (strain ATCC 51908 / MS32).